The primary structure comprises 360 residues: BLOC-1-related complex subunit 6 (360 aa).

The interval 1–201 (MEAAQGRLGP…TGAGGGRRAT (201 aa)) is disordered. Over residues 23–33 (ATFSGRPSRTP) the composition is skewed to polar residues. The residue at position 41 (threonine 41) is a Phosphothreonine. Serine 130 carries the post-translational modification Phosphoserine. A compositionally biased stretch (acidic residues) spans 144–155 (EGDDDDDEDEEA). Phosphoserine is present on serine 173. A compositionally biased stretch (gly residues) spans 179-198 (GACGGGGSSSSGETGAGGGR). Threonine 201 carries the phosphothreonine modification. Serine 204 carries the post-translational modification Phosphoserine.

The protein belongs to the BORCS6 family. In terms of assembly, component of the BLOC-one-related complex (BORC) which is composed of BLOC1S1, BLOC1S2, BORCS5, BORCS6, BORCS7, BORCS8, KXD1 and SNAPIN.

Its subcellular location is the lysosome membrane. Its function is as follows. As part of the BORC complex may play a role in lysosomes movement and localization at the cell periphery. Associated with the cytosolic face of lysosomes, the BORC complex may recruit ARL8B and couple lysosomes to microtubule plus-end-directed kinesin motor. In Mus musculus (Mouse), this protein is BLOC-1-related complex subunit 6.